The primary structure comprises 150 residues: Peptide deformylase 1 (150 aa).

Cys-88 and His-130 together coordinate Fe cation. The active site involves Glu-131. His-134 provides a ligand contact to Fe cation.

This sequence belongs to the polypeptide deformylase family. It depends on Fe(2+) as a cofactor.

The catalysed reaction is N-terminal N-formyl-L-methionyl-[peptide] + H2O = N-terminal L-methionyl-[peptide] + formate. Its function is as follows. Removes the formyl group from the N-terminal Met of newly synthesized proteins. Requires at least a dipeptide for an efficient rate of reaction. N-terminal L-methionine is a prerequisite for activity but the enzyme has broad specificity at other positions. The polypeptide is Peptide deformylase 1 (Clostridium acetobutylicum (strain ATCC 824 / DSM 792 / JCM 1419 / IAM 19013 / LMG 5710 / NBRC 13948 / NRRL B-527 / VKM B-1787 / 2291 / W)).